Consider the following 99-residue polypeptide: Plastocyanin (99 aa).

Residues 1–99 (LDVLLGGDDG…AGMVGKVTVN (99 aa)) form the Plastocyanin-like domain. Residues His37, Cys84, His87, and Met92 each coordinate Cu cation.

This sequence belongs to the plastocyanin family. It depends on Cu(2+) as a cofactor.

It localises to the plastid. The protein resides in the chloroplast thylakoid membrane. In terms of biological role, participates in electron transfer between P700 and the cytochrome b6-f complex in photosystem I. The protein is Plastocyanin (PETE) of Solanum tuberosum (Potato).